Here is a 424-residue protein sequence, read N- to C-terminus: NADH-quinone oxidoreductase subunit H (424 aa).

The next 9 membrane-spanning stretches (helical) occupy residues 11–31 (LVVA…LVAI), 79–99 (FVYF…FAFI), 119–139 (LPVA…GIVL), 160–180 (VISY…YAGS), 193–213 (VWYI…MVGE), 255–275 (VSAL…PLNL), 283–303 (WWPV…YFWL), 317–337 (ALGW…AAVI), and 347–367 (YWTP…VMSL). The disordered stretch occupies residues 376-424 (AVTKARRRGKQPAAGPDEQGALEPLFPTPPLPMKPLAQPVGASKENARG).

It belongs to the complex I subunit 1 family. In terms of assembly, NDH-1 is composed of 14 different subunits. Subunits NuoA, H, J, K, L, M, N constitute the membrane sector of the complex.

It localises to the cell membrane. It carries out the reaction a quinone + NADH + 5 H(+)(in) = a quinol + NAD(+) + 4 H(+)(out). Functionally, NDH-1 shuttles electrons from NADH, via FMN and iron-sulfur (Fe-S) centers, to quinones in the respiratory chain. The immediate electron acceptor for the enzyme in this species is believed to be menaquinone. Couples the redox reaction to proton translocation (for every two electrons transferred, four hydrogen ions are translocated across the cytoplasmic membrane), and thus conserves the redox energy in a proton gradient. This subunit may bind ubiquinone. This Mycobacterium ulcerans (strain Agy99) protein is NADH-quinone oxidoreductase subunit H.